We begin with the raw amino-acid sequence, 249 residues long: Elsinochromes biosynthesis cluster protein HP3 (249 aa).

Asparagine 106 carries N-linked (GlcNAc...) asparagine glycosylation. Residues 138–158 form a helical membrane-spanning segment; that stretch reads VVFAFMLSAWLVWLITVYAFA.

The protein localises to the membrane. Its function is as follows. Part of the gene cluster that mediates the biosynthesis of elsinochromes, pigments consisting of at least four interconvertible tautomers (A, B, C and D) that have a core phenolic quinone to which various side chains are attached and which play an important role in fungal pathogenesis. The non-reducing polyketide synthase PKS1 was proposed to iteratively catalyze decarboxylation between acetyl-CoA and malonyl-CoA subunits for polyketide chain elongation. The released polyketide undergoes cyclization to form an aromatic ring, and proceeds via serial modification steps to produce the heptaketide back- bone of elsinochrome. As elsinochrome has a symmetrical structure, two identical heptaketides are fused to form a core 1,2-dihydrobenzo-perylene ring structure, which can then be successively modified to produce the various derivatives of elsinochrome. Some of these reactions may be cooperatively carried out, at least in part, by the products of RDT1, OXR1 and PKS1. PRF1, embedded within the elsinochrome cluster possibly functions to stabilize some of the biosynthetic enzymes required for elsinochrome production. As prefoldin is a hexamer containing 2 a and 4 b subunits, additional prefoldin subunits, whose coding genes may not immediately link to the elsinochrome biosynthetic gene cluster, are required to fulfill the chaperone function. In addition, no methyltransferase-coding gene exists within the biosynthetic gene cluster, even though elsinochrome has four methyl groups at positions C3, C7, C8 and C12. Apparently, the identified gene cluster does not contain the entire entourage of genes responsible for elsinochrome biosynthesis. Once elsinochrome is synthesized, it must be exported outside the fungal cells, which is probably accomplished by the ECT1 transporter, to avoid toxicity. This chain is Elsinochromes biosynthesis cluster protein HP3, found in Elsinoe fawcettii (Citrus scab fungus).